Here is a 69-residue protein sequence, read N- to C-terminus: DNA-directed RNA polymerase subunit epsilon (69 aa).

It belongs to the RNA polymerase subunit epsilon family. As to quaternary structure, RNAP is composed of a core of 2 alpha, a beta and a beta' subunit. The core is associated with a delta subunit, and at least one of epsilon or omega. When a sigma factor is associated with the core the holoenzyme is formed, which can initiate transcription.

It catalyses the reaction RNA(n) + a ribonucleoside 5'-triphosphate = RNA(n+1) + diphosphate. A non-essential component of RNA polymerase (RNAP). This is DNA-directed RNA polymerase subunit epsilon from Geobacillus sp. (strain WCH70).